The primary structure comprises 546 residues: Probable T-complex protein 1 subunit theta (546 aa).

The disordered stretch occupies residues 527-546 (MSKPAGGPKPPGPNPHWDDD).

It belongs to the TCP-1 chaperonin family. Heterooligomeric complex of about 850 to 900 kDa that forms two stacked rings, 12 to 16 nm in diameter.

The protein resides in the cytoplasm. In terms of biological role, molecular chaperone; assists the folding of proteins upon ATP hydrolysis. Known to play a role, in vitro, in the folding of actin and tubulin. The chain is Probable T-complex protein 1 subunit theta (cct8) from Schizosaccharomyces pombe (strain 972 / ATCC 24843) (Fission yeast).